We begin with the raw amino-acid sequence, 1306 residues long: Receptor-type tyrosine-protein phosphatase C (1306 aa).

The signal sequence occupies residues 1–25 (MTMYLWLKLLAFGFAFLDTEVFVTG). Residues 26–577 (QSPTPSPTGL…LHHSTSYNSK (552 aa)) lie on the Extracellular side of the membrane. The segment at 28-163 (PTPSPTGLTT…TASTFPTDPV (136 aa)) is disordered. 2 stretches are compositionally biased toward polar residues: residues 52-61 (THTTAFSPAS) and 70-131 (SETT…SGSA). N-linked (GlcNAc...) asparagine glycosylation is found at N80, N92, N97, N186, N192, N199, N234, N262, N272, and N278. A glycan (N-linked (GlcNAc...) asparagine; atypical) is linked at N286. Residues N337, N380, N421, N470, N490, and N531 are each glycosylated (N-linked (GlcNAc...) asparagine). Fibronectin type-III domains follow at residues 391-483 (SPGE…TKSA) and 484-576 (PPSQ…SYNS). A helical transmembrane segment spans residues 578 to 598 (ALIAFLAFLIIVTSIALLVVL). At 599–1306 (YKIYDLHKKR…PASPALNQGS (708 aa)) the chain is on the cytoplasmic side. 2 Tyrosine-protein phosphatase domains span residues 653 to 912 (FLAE…LVEY) and 944 to 1228 (LEAE…IAST). Y683 carries the post-translational modification Phosphotyrosine. Substrate is bound by residues D821, 853 to 859 (CSAGVGR), and Q897. The Phosphocysteine intermediate role is filled by C853. Phosphoserine is present on residues S975, S994, S997, S1001, S1004, S1005, and S1009. The interval 993 to 1014 (MSKESEHDSDESSDDDSDSEEP) is disordered. Over residues 999-1012 (HDSDESSDDDSDSE) the composition is skewed to acidic residues. Residue C1169 is the Phosphocysteine intermediate of the active site. The interval 1261–1306 (CVNPLGAPEKLPEAKEQAEGSEPTSGTEGPEHSVNGPASPALNQGS) is disordered. S1299 is subject to Phosphoserine.

Belongs to the protein-tyrosine phosphatase family. Receptor class 1/6 subfamily. Binds GANAB and PRKCSH. Interacts with SKAP1. Interacts with DPP4; the interaction is enhanced in an interleukin-12-dependent manner in activated lymphocytes. Interacts with CD53; this interaction stabilizes PTPRC on the membrane and is required for optimal phosphatase activity. In terms of assembly, interacts with CLEC10A. As to quaternary structure, does not interact with CLEC10A. (Microbial infection) Interacts with human cytomegalovirus protein UL11; the interaction is required for binding of UL11 to T-cells. Post-translationally, heavily N- and O-glycosylated. As to expression, isoform 1: Detected in thymocytes. Isoform 2: Detected in thymocytes. Isoform 3: Detected in thymocytes. Isoform 4: Not detected in thymocytes. Isoform 5: Detected in thymocytes. Isoform 6: Not detected in thymocytes. Isoform 7: Detected in thymocytes. Isoform 8: Not detected in thymocytes.

The protein localises to the cell membrane. The protein resides in the membrane raft. It is found in the synapse. It carries out the reaction O-phospho-L-tyrosyl-[protein] + H2O = L-tyrosyl-[protein] + phosphate. In terms of biological role, protein tyrosine-protein phosphatase required for T-cell activation through the antigen receptor. Acts as a positive regulator of T-cell coactivation upon binding to DPP4. The first PTPase domain has enzymatic activity, while the second one seems to affect the substrate specificity of the first one. Upon T-cell activation, recruits and dephosphorylates SKAP1 and FYN. Dephosphorylates LYN, and thereby modulates LYN activity. Interacts with CLEC10A at antigen presenting cell-T cell contact; CLEC10A on immature dendritic cells recognizes Tn antigen-carrying PTPRC/CD45 receptor on effector T cells and modulates T cell activation threshold to limit autoreactivity. (Microbial infection) Acts as a receptor for human cytomegalovirus protein UL11 and mediates binding of UL11 to T-cells, leading to reduced induction of tyrosine phosphorylation of multiple signaling proteins upon T-cell receptor stimulation and impaired T-cell proliferation. This Homo sapiens (Human) protein is Receptor-type tyrosine-protein phosphatase C.